The chain runs to 537 residues: MDALSQAISSGISVPYKNNSSSLVPSHGLTSLILRKSRSPVNPSSRSRVSVRASEIQHSKTSASSIDLSDPDWKLKYEKDFEQRFSIPHITDVLPDAEAIRSTFCLKMRSPTEDFVGGYPSDEEWHGYINNNDRVLLKVISYSSPTSAGAECLDHDCSWVEQWIHRAGPREKIYFRPEEVKAAIITCGGLCPGLNDVIRHIVITLEIYGVKNIVGIPFGYRGFSDKDLTEMPLSRKVVQNIHLSGGSLLGVSRGGPSVSEIVDSMEERGINMLFVLGGNGTHAGANAIHNECRKRKIKVAVVGVPKTIDNDILHMDKTFGFDTAVEEAQRAINSAYIEAHSAYHGIGVVKLMGRNSGFIAMQASLASGQVDICLIPEVPFNLHGPNGVLKHLKYLIETKGSAVICVAEGAGQNFLEKTNAKDASGNAVLGDFGVYIQQETKKYFKEISTPIDVKYIDPTYMIRAVRANASDGILCTVLGQNAVHGAFAGYSGITVGIINTHYAYLPITEVIAYPKSVDPNSRMWHRCLTSTGQPDFI.

The transit peptide at 1–52 (MDALSQAISSGISVPYKNNSSSLVPSHGLTSLILRKSRSPVNPSSRSRVSVR) directs the protein to the chloroplast. The segment at 35 to 64 (RKSRSPVNPSSRSRVSVRASEIQHSKTSAS) is disordered. Over residues 39–54 (SPVNPSSRSRVSVRAS) the composition is skewed to low complexity. Ser147 is subject to Phosphoserine. ATP-binding positions include Gly189, 253 to 254 (RG), and 278 to 281 (GNGT). Asn279 contributes to the Mg(2+) binding site. Substrate-binding positions include 307–309 (TID), 352–354 (MGR), Glu408, and 460–463 (YMIR). Asp309 functions as the Proton acceptor in the catalytic mechanism.

This sequence belongs to the phosphofructokinase type A (PFKA) family. PPi-dependent PFK group II subfamily. Atypical ATP-dependent clade 'X' sub-subfamily. In terms of assembly, homotetramer. Mg(2+) serves as cofactor. As to expression, expressed in roots, leaves, stems and flowers.

Its subcellular location is the plastid. It localises to the chloroplast. It catalyses the reaction beta-D-fructose 6-phosphate + ATP = beta-D-fructose 1,6-bisphosphate + ADP + H(+). Its pathway is carbohydrate degradation; glycolysis; D-glyceraldehyde 3-phosphate and glycerone phosphate from D-glucose: step 3/4. Allosterically activated by AMP. Functionally, catalyzes the phosphorylation of D-fructose 6-phosphate to fructose 1,6-bisphosphate by ATP, the first committing step of glycolysis. The chain is ATP-dependent 6-phosphofructokinase 5, chloroplastic from Arabidopsis thaliana (Mouse-ear cress).